Reading from the N-terminus, the 181-residue chain is Large ribosomal subunit protein uL5c (181 aa).

It belongs to the universal ribosomal protein uL5 family. Part of the 50S ribosomal subunit; contacts the 5S rRNA.

Its subcellular location is the plastid. The protein localises to the chloroplast. Binds 5S rRNA, forms part of the central protuberance of the 50S subunit. The polypeptide is Large ribosomal subunit protein uL5c (rpl5) (Pyropia yezoensis (Susabi-nori)).